We begin with the raw amino-acid sequence, 360 residues long: Peptide chain release factor 1 (360 aa).

Q235 bears the N5-methylglutamine mark. A compositionally biased stretch (basic and acidic residues) spans 291-308 (ASERRNLLGTGDRSDRNR). The tract at residues 291–312 (ASERRNLLGTGDRSDRNRTYNF) is disordered.

Belongs to the prokaryotic/mitochondrial release factor family. In terms of processing, methylated by PrmC. Methylation increases the termination efficiency of RF1.

The protein localises to the cytoplasm. In terms of biological role, peptide chain release factor 1 directs the termination of translation in response to the peptide chain termination codons UAG and UAA. The protein is Peptide chain release factor 1 of Yersinia pseudotuberculosis serotype O:1b (strain IP 31758).